The following is a 21-amino-acid chain: Protein YnfR (21 aa).

The sequence is that of Protein YnfR from Escherichia coli (strain K12).